A 553-amino-acid polypeptide reads, in one-letter code: MKQGLILKSVLSAAIIASLAGCATAPAQQWEADKTYKLTILHTNDHHGRFWQNQYGEYGMAARKTLIDQLRADIEAQGGSVLLLSGGDINTGVPESDLQDAEPDFKGMSKIGYDAMALGNHEFDNPLEVLFKQKEWANFPMLSANIYDKATGKRLFEPYHIFDKQGIKIAVIGLTTEDTAKIGNPEYIGGIDFRDPKEEAKKVIAELKKKEKPDLIIAVTHMGHYQNGEHGVNAPGDVALARYLPAGELDMIVGGHSQEPVCMEGPNLVKKNFKPGDECKPDIQNGTYIVQAYEWGKYVGRADYEFRNGELNMVSYNLIPVNLKKKVEVNGETQRVFATSEIKEDSAMLEFLRPFQEKGQEQLSIKIAHSNGKLEGDRNVVRFEQTNLGRMIAMAHMQRAKADFAVMNSGGVRDSIQAGDITYKDVLKVQPFGNIVSYVDMNGQEVLDYLNVVATKPVDSGAYAQFAGISMTVADGKVSNVVIGGKQLRLDATYRFTVPSFNAAGGDGYPKITDHPGYVNTGFVDAEVLKDYLEANSPIDVNRFAPAGEIVYR.

Residues 1–21 (MKQGLILKSVLSAAIIASLAG) form the signal peptide. Residue C22 is the site of N-palmitoyl cysteine attachment. C22 carries S-diacylglycerol cysteine lipidation. The a divalent metal cation site is built by D45, H47, D88, N120, H221, H256, and Q258. Substrate contacts are provided by residues F432 and 501–507 (FNAAGGD).

Belongs to the 5'-nucleotidase family. The cofactor is chloride. Requires Mg(2+) as cofactor.

Its subcellular location is the cell outer membrane. It carries out the reaction a ribonucleoside 5'-phosphate + H2O = a ribonucleoside + phosphate. Functionally, degradation of extracellular 5'-nucleotides for nutritional needs. This is 5'-nucleotidase (nutA) from Vibrio cholerae serotype O1 (strain ATCC 39315 / El Tor Inaba N16961).